The sequence spans 271 residues: Putative phosphoenolpyruvate synthase regulatory protein (271 aa).

152–159 is a binding site for ADP; sequence GVSRCGKT.

Belongs to the pyruvate, phosphate/water dikinase regulatory protein family. PSRP subfamily.

It carries out the reaction [pyruvate, water dikinase] + ADP = [pyruvate, water dikinase]-phosphate + AMP + H(+). The enzyme catalyses [pyruvate, water dikinase]-phosphate + phosphate + H(+) = [pyruvate, water dikinase] + diphosphate. In terms of biological role, bifunctional serine/threonine kinase and phosphorylase involved in the regulation of the phosphoenolpyruvate synthase (PEPS) by catalyzing its phosphorylation/dephosphorylation. In Legionella pneumophila (strain Lens), this protein is Putative phosphoenolpyruvate synthase regulatory protein.